A 775-amino-acid polypeptide reads, in one-letter code: N6-adenosine-methyltransferase non-catalytic subunit MTB (775 aa).

Residues 1-10 show a composition bias toward basic and acidic residues; it reads MKKKQEESSL. Disordered regions lie at residues 1–424 and 520–569; these read MKKK…GAIP and DRGG…EQND. Over residues 40–49 the composition is skewed to low complexity; that stretch reads FESSSRSGGS. 5 stretches are compositionally biased toward basic and acidic residues: residues 50 to 79, 100 to 117, 125 to 222, 229 to 278, and 333 to 344; these read KSKEDNKSVVDVEHQDRDSKRERDGRERTH, DGDHKSSKLSDSRHDSGG, EHGE…LKDN, SSGD…RGEA, and EWAHNQEGRQRS. Polar residues predominate over residues 375–400; that stretch reads QRGSTPGRTNFVQTPNRGYQTPQGTR.

Belongs to the MT-A70-like family. Forms homodimers. Interacts with HAKAI, MTA and VIR. Associates with MTA, FIP37, VIR and HAKAI to form the m6A writer complex which is essential for adenosine methylation at specific mRNA sequences.

It localises to the nucleus speckle. The protein resides in the nucleus. Its subcellular location is the nucleoplasm. In terms of biological role, probable non-catalytic subunit of the N6-methyltransferase complex, a multiprotein complex that mediates N6-methyladenosine (m6A) methylation at the 5'-[AG]GAC-3' consensus sites of some mRNAs. Associates with MTA, FIP37, VIR and HAKAI to form the m6A writer complex which is essential for adenosine methylation at specific mRNA sequences. N6-methyladenosine (m6A) plays a role in mRNA stability, processing, translation efficiency and editing. The sequence is that of N6-adenosine-methyltransferase non-catalytic subunit MTB from Arabidopsis thaliana (Mouse-ear cress).